The following is a 501-amino-acid chain: NAD(P)H-quinone oxidoreductase subunit 2, chloroplastic (501 aa).

14 consecutive transmembrane segments (helical) span residues 15 to 35, 40 to 60, 82 to 102, 107 to 127, 132 to 152, 167 to 187, 212 to 232, 244 to 264, 278 to 298, 307 to 327, 333 to 353, 378 to 398, 410 to 430, and 466 to 486; these read ILPE…DLTF, TIWL…ILLF, IFQS…IEYI, MAIP…MFLC, LVTI…LCGY, LLIG…LYGL, TFIA…LVPF, PTPV…ALAT, WKIF…LVAI, LAYS…TGDL, MTIY…CIIL, FSLT…GFFG, GFYL…YYYL, and FVMI…NPIF.

The protein belongs to the complex I subunit 2 family. NDH is composed of at least 16 different subunits, 5 of which are encoded in the nucleus.

The protein localises to the plastid. The protein resides in the chloroplast thylakoid membrane. It catalyses the reaction a plastoquinone + NADH + (n+1) H(+)(in) = a plastoquinol + NAD(+) + n H(+)(out). The catalysed reaction is a plastoquinone + NADPH + (n+1) H(+)(in) = a plastoquinol + NADP(+) + n H(+)(out). In terms of biological role, NDH shuttles electrons from NAD(P)H:plastoquinone, via FMN and iron-sulfur (Fe-S) centers, to quinones in the photosynthetic chain and possibly in a chloroplast respiratory chain. The immediate electron acceptor for the enzyme in this species is believed to be plastoquinone. Couples the redox reaction to proton translocation, and thus conserves the redox energy in a proton gradient. In Marchantia polymorpha (Common liverwort), this protein is NAD(P)H-quinone oxidoreductase subunit 2, chloroplastic.